The chain runs to 327 residues: MGSLLWLAVAYVMGSIPFGLLFAKMFCGTDPRTGGSRNVGATNVARLCGTKVGVLTLVCDALKGAIPVAVALSISDSTVFHSLTALAALLGHLYSCFLSFKGGKAVATTVGVFLPLAFWPLVLSGIACLAVIWRSGFVSLGSLTLVTAMPAMLLLGGHWKLVPLALVVMVLVYWSHRENIGRLSRGEEKPWQKKHHDAAQGTDAGAAPEAAADAAHAGTVDCGCDCGCDAHKPSTEAAPSQETSDASAHGAEAPVAADEGDKRENEEHDNAPEASAAESKPEDKPAGKTVGKPASRSVAKPASKSAGKTGGKAADKSAGKSGKSSGQ.

Helical transmembrane passes span 3 to 23, 52 to 72, 78 to 98, 112 to 132, and 152 to 172; these read SLLW…LLFA, VGVL…AVAL, TVFH…SCFL, VFLP…LAVI, and MLLL…MVLV. Disordered regions lie at residues 184 to 212 and 233 to 327; these read SRGE…EAAA and PSTE…SSGQ. Residues 199-212 are compositionally biased toward low complexity; the sequence is AQGTDAGAAPEAAA. Polar residues predominate over residues 237-246; it reads AAPSQETSDA. Residues 259–271 are compositionally biased toward basic and acidic residues; sequence EGDKRENEEHDNA.

The protein belongs to the PlsY family. As to quaternary structure, probably interacts with PlsX.

Its subcellular location is the cell inner membrane. It carries out the reaction an acyl phosphate + sn-glycerol 3-phosphate = a 1-acyl-sn-glycero-3-phosphate + phosphate. It participates in lipid metabolism; phospholipid metabolism. Functionally, catalyzes the transfer of an acyl group from acyl-phosphate (acyl-PO(4)) to glycerol-3-phosphate (G3P) to form lysophosphatidic acid (LPA). This enzyme utilizes acyl-phosphate as fatty acyl donor, but not acyl-CoA or acyl-ACP. The chain is Glycerol-3-phosphate acyltransferase from Nitratidesulfovibrio vulgaris (strain ATCC 29579 / DSM 644 / CCUG 34227 / NCIMB 8303 / VKM B-1760 / Hildenborough) (Desulfovibrio vulgaris).